Consider the following 217-residue polypeptide: MSRALLRSVLELRTPVTRLPPSFLLPFRPAARFLHQTAQQVEPTSQSDAAAAAATLLKASPPKVTTATTPEAPAAVPTSTPFSQQPPISQQVKELLPVLAAQPGHYTTIHIHGKPYLVTEGDTVKLPFKMPGVAPGDVLRLNRASVIGSRDLTLQGAPYVDERLFECRAIVMGTESEPMRVMIKKKRRCRKKKHVFSKHKYTVLRINQLKINDVSSL.

The segment covering 61 to 81 (PPKVTTATTPEAPAAVPTSTP) has biased composition (low complexity). The segment at 61–87 (PPKVTTATTPEAPAAVPTSTPFSQQPP) is disordered.

This sequence belongs to the bacterial ribosomal protein bL21 family. In terms of assembly, component of the mitochondrial large ribosomal subunit (mt-LSU). Mature N.crassa 74S mitochondrial ribosomes consist of a small (37S) and a large (54S) subunit. The 37S small subunit contains a 16S ribosomal RNA (16S mt-rRNA) and 32 different proteins. The 54S large subunit contains a 23S rRNA (23S mt-rRNA) and 42 different proteins.

It localises to the mitochondrion. Component of the mitochondrial ribosome (mitoribosome), a dedicated translation machinery responsible for the synthesis of mitochondrial genome-encoded proteins, including at least some of the essential transmembrane subunits of the mitochondrial respiratory chain. The mitoribosomes are attached to the mitochondrial inner membrane and translation products are cotranslationally integrated into the membrane. This chain is Large ribosomal subunit protein bL21m (mrpl49), found in Neurospora crassa (strain ATCC 24698 / 74-OR23-1A / CBS 708.71 / DSM 1257 / FGSC 987).